A 157-amino-acid polypeptide reads, in one-letter code: Large ribosomal subunit protein uL15 (157 aa).

It belongs to the universal ribosomal protein uL15 family. As to quaternary structure, part of the 50S ribosomal subunit.

Functionally, binds to the 23S rRNA. The polypeptide is Large ribosomal subunit protein uL15 (Ehrlichia ruminantium (strain Welgevonden)).